Reading from the N-terminus, the 359-residue chain is DNA replication and repair protein RecF (359 aa).

An ATP-binding site is contributed by 30–37; that stretch reads GQNAQGKT.

This sequence belongs to the RecF family.

It is found in the cytoplasm. Its function is as follows. The RecF protein is involved in DNA metabolism; it is required for DNA replication and normal SOS inducibility. RecF binds preferentially to single-stranded, linear DNA. It also seems to bind ATP. This chain is DNA replication and repair protein RecF, found in Lactococcus lactis subsp. cremoris (strain SK11).